The chain runs to 305 residues: UDP-N-acetylenolpyruvoylglucosamine reductase 2 (305 aa).

In terms of domain architecture, FAD-binding PCMH-type spans 33-197; the sequence is VGGKADVFVA…LEARFELEEG (165 aa). The active site involves R176. The active-site Proton donor is S226. Residue E296 is part of the active site.

Belongs to the MurB family. FAD is required as a cofactor.

It localises to the cytoplasm. It carries out the reaction UDP-N-acetyl-alpha-D-muramate + NADP(+) = UDP-N-acetyl-3-O-(1-carboxyvinyl)-alpha-D-glucosamine + NADPH + H(+). It functions in the pathway cell wall biogenesis; peptidoglycan biosynthesis. In terms of biological role, cell wall formation. This is UDP-N-acetylenolpyruvoylglucosamine reductase 2 (murB2) from Bacillus anthracis.